Reading from the N-terminus, the 940-residue chain is Isoleucine--tRNA ligase (940 aa).

Positions 58 to 68 match the 'HIGH' region motif; the sequence is PYANGSIHIGH. Glu-564 contacts L-isoleucyl-5'-AMP. The short motif at 605-609 is the 'KMSKS' region element; the sequence is KMSKS. ATP is bound at residue Lys-608. Zn(2+) contacts are provided by Cys-903, Cys-906, Cys-923, and Cys-926.

It belongs to the class-I aminoacyl-tRNA synthetase family. IleS type 1 subfamily. Monomer. Requires Zn(2+) as cofactor.

The protein resides in the cytoplasm. It carries out the reaction tRNA(Ile) + L-isoleucine + ATP = L-isoleucyl-tRNA(Ile) + AMP + diphosphate. In terms of biological role, catalyzes the attachment of isoleucine to tRNA(Ile). As IleRS can inadvertently accommodate and process structurally similar amino acids such as valine, to avoid such errors it has two additional distinct tRNA(Ile)-dependent editing activities. One activity is designated as 'pretransfer' editing and involves the hydrolysis of activated Val-AMP. The other activity is designated 'posttransfer' editing and involves deacylation of mischarged Val-tRNA(Ile). This Shewanella baltica (strain OS155 / ATCC BAA-1091) protein is Isoleucine--tRNA ligase.